We begin with the raw amino-acid sequence, 715 residues long: ATP-binding cassette sub-family B member 10, mitochondrial (715 aa).

The transit peptide at 1 to 82 directs the protein to the mitochondrion; it reads MRAPSARALL…SSGARRCWVL (82 aa). Over 83 to 133 the chain is Mitochondrial matrix; it reads AGPRAAHPLFARLQGAAATGVRDLGNDSQRRPAATGRSEVWKLLGLVRPER. Residues 134–157 traverse the membrane as a helical segment; sequence GRLSAAVGFLAVSSVITMSAPFFL. Residues 136–422 form the ABC transmembrane type-1 domain; that stretch reads LSAAVGFLAV…LSSFYSELMK (287 aa). At 158 to 178 the chain is on the mitochondrial intermembrane side; it reads GRIIDVIYTNPSEGYGDSLTR. The helical transmembrane segment at 179 to 201 threads the bilayer; sequence LCAVLTCVFLCGAAANGIRVYLM. Over 202–252 the chain is Mitochondrial matrix; the sequence is QSSGQSIVNRLRTSLFSSILRQEVAFFDKTRTGELINRLSSDTALLGRSVT. Position 230 is an N6-acetyllysine (Lys230). A helical membrane pass occupies residues 253-275; it reads ENLSDGLRAGAQASVGVGMMFFV. At 276–278 the chain is on the mitochondrial intermembrane side; the sequence is SPS. The chain crosses the membrane as a helical span at residues 279–298; it reads LATFVLSVVPPISVLAVIYG. At 299-357 the chain is on the mitochondrial matrix side; that stretch reads RYLRKLSKATQDSLAEATQLAEERIGNIRTIRAFGKEMTEVEKYTGRVDQLLQLAQKEA. A helical transmembrane segment spans residues 358–381; that stretch reads LARAGFFGAAGLSGNLIVLSVLYK. Over 382–395 the chain is Mitochondrial intermembrane; sequence GGLLMGSAHMTVGE. The chain crosses the membrane as a helical span at residues 396–417; it reads LSSFLMYAFWVGLSIGGLSSFY. The Mitochondrial matrix segment spans residues 418–715; the sequence is SELMKGLGAG…AEQFLEPARA (298 aa). One can recognise an ABC transporter domain in the interval 457–696; the sequence is LEFRNVHFTY…PNGLYRKLMN (240 aa). ATP-binding residues include Gly495, Gly497, Lys498, Ser499, and Thr500. Ser499 contacts Mg(2+). Cys547 bears the S-glutathionyl cysteine mark. A Mg(2+)-binding site is contributed by Asp623.

The protein belongs to the ABC transporter superfamily. ABCB family. Mitochondrial peptide exporter (TC 3.A.1.212) subfamily. Homodimer or homooligomer. Interacts with PAAT; this interaction regulates ABCB10. Interacts with SLC25A37; this interaction stabilizes SLC25A37 and enhances the function of SLC25A37 to import mitochondrial iron during erythroid differentiation. Interacts with FECH; this interaction may allow the formation of the oligomeric complex with SLC25A37. Forms a complex with ABCB7 and FECH, where a dimeric FECH bridges ABCB7 and ABCB10 homodimers; this complex may be required for cellular iron homeostasis, mitochondrial function and heme biosynthesis. Expressed at particularly high levels in fetal liver, and erythroid tissues of embryos and adults. Found also in adult bone marrow, liver and kidney, and at lower levels in heart, brain and spleen.

The protein resides in the mitochondrion inner membrane. The enzyme catalyses biliverdin IXalpha(in) + ATP + H2O = biliverdin IXalpha(out) + ADP + phosphate + H(+). With respect to regulation, oxidized glutathione (GSSG) stimulates ATP hydrolysis without affecting ATP binding, whereas reduced glutathione (GSH) inhibits ATP binding and hydrolysis. ATP-dependent transporter located in the mitochondrial inner membrane that catalyzes the export of biliverdin from the mitochondrial matrix, and plays a crucial role in hemoglobin synthesis and antioxidative stress. Participates in the early step of the heme biosynthetic process during insertion of iron into protoporphyrin IX (PPIX). Involved in the stabilization of the iron transporter mitoferrin-1/SLC25A37. In addition may be involved in mitochondrial unfolded protein response (UPRmt) signaling pathway, although ABCB10 probably does not participate in peptide export from mitochondria. This Mus musculus (Mouse) protein is ATP-binding cassette sub-family B member 10, mitochondrial.